We begin with the raw amino-acid sequence, 190 residues long: MKKIILASSSPRRREILSRFFDIIVHPSNVNEDKIKEKDPTETAIKIAKAKAFDLAVKFPTDTIIAADTIVTLNGKILGKPKDSEEARKMLKQLSGKTHEVVTGYCIISGDKIIEGAEITKVKFRELSDDLIEWYISTQEWRDKAGGYGIQGFGAILVEHIEGDYYNVVGLPIIVIIKLIELGHKLKRIF.

The active-site Proton acceptor is Asp68.

It belongs to the Maf family. YhdE subfamily. A divalent metal cation is required as a cofactor.

It localises to the cytoplasm. The enzyme catalyses dTTP + H2O = dTMP + diphosphate + H(+). It carries out the reaction UTP + H2O = UMP + diphosphate + H(+). In terms of biological role, nucleoside triphosphate pyrophosphatase that hydrolyzes dTTP and UTP. May have a dual role in cell division arrest and in preventing the incorporation of modified nucleotides into cellular nucleic acids. The protein is dTTP/UTP pyrophosphatase of Pyrococcus furiosus (strain ATCC 43587 / DSM 3638 / JCM 8422 / Vc1).